We begin with the raw amino-acid sequence, 282 residues long: E3 ubiquitin-protein ligase Siah1 (282 aa).

The tract at residues 1–28 (MSRQTATALPTGTSKCPPSQRVPTLSGT) is disordered. The segment at 41–76 (CPVCFDYVLPPILQCQSGHLVCSNCRPKLTCCPTCR) adopts an RING-type zinc-finger fold. Positions 90–282 (VANSVLFPCK…LGINVTISMC (193 aa)) are SBD. The SIAH-type zinc-finger motif lies at 93 to 153 (SVLFPCKYAS…VMPHLLHQHK (61 aa)). The Zn(2+) site is built by C98, C105, H117, C121, C128, C135, H147, and H152.

It belongs to the SINA (Seven in absentia) family. In terms of assembly, homodimer.

It catalyses the reaction S-ubiquitinyl-[E2 ubiquitin-conjugating enzyme]-L-cysteine + [acceptor protein]-L-lysine = [E2 ubiquitin-conjugating enzyme]-L-cysteine + N(6)-ubiquitinyl-[acceptor protein]-L-lysine.. It participates in protein modification; protein ubiquitination. In terms of biological role, E3 ubiquitin-protein ligase that mediates ubiquitination and subsequent proteasomal degradation of target proteins. E3 ubiquitin ligases accept ubiquitin from an E2 ubiquitin-conjugating enzyme in the form of a thioester and then directly transfers the ubiquitin to targeted substrates. It probably triggers the ubiquitin-mediated degradation of different substrates. The polypeptide is E3 ubiquitin-protein ligase Siah1 (siah1) (Danio rerio (Zebrafish)).